The chain runs to 527 residues: Gustatory receptor for bitter taste 66a (527 aa).

Topologically, residues 1–46 (MAQAEDAVQPLLQQFQQLFFISKIAGILPQDLEKFRSRNLLEKSRN) are cytoplasmic. The helical transmembrane segment at 47 to 67 (GMIYMLSTLILYVVLYNILIY) threads the bilayer. Over 68–80 (SFGEEDRSLKASQ) the chain is Extracellular. Residues 81 to 101 (STLTFVIGLFLTYIGLIMMVS) form a helical membrane-spanning segment. Residues 102-144 (DQLTALRNQGRIGELYERIRLVDERLYKEGCVMDNSTIGRRIR) lie on the Cytoplasmic side of the membrane. A helical membrane pass occupies residues 145-165 (IMLIMTVIFELSILVSTYVKL). Topologically, residues 166-174 (VDYSQWMSL) are extracellular. A helical membrane pass occupies residues 175-195 (LWIVSAIPTFINTLDKIWFAV). Residues 196 to 345 (SLYALKERFE…KALNELWSYP (150 aa)) are Cytoplasmic-facing. A helical transmembrane segment spans residues 346 to 366 (ILSLMAYGFLIFTAQLYFLYC). Topologically, residues 367–382 (ATQYQSIPSLFRSAKN) are extracellular. A helical transmembrane segment spans residues 383–403 (PFITVIVLSYTSGKCVYLIYL). The Cytoplasmic portion of the chain corresponds to 404–460 (SWKTSQASKRTGISLHKCGVVADDNLLYEIVNHLSLKLLNHSVDFSACGFFTLDMET). A helical transmembrane segment spans residues 461–481 (LYGVSGGITSYLIILIQFNLA). The Extracellular segment spans residues 482–527 (AQQAKEAIQTFNSLNDTAGLVGAATDMDNISSTLRDFVTTTMTPAV). N496 and N510 each carry an N-linked (GlcNAc...) asparagine glycan.

This sequence belongs to the insect chemoreceptor superfamily. Gustatory receptor (GR) family. Gr66a subfamily. In terms of tissue distribution, taste hairs in labial palps, labral and cibarial sense organs and forelegs. In larvae, is expressed in neurons of the terminal external chemosensory organ, as well as in the dorsal, ventral, and posterior pharyngeal sense organs.

It localises to the cell membrane. In terms of biological role, gustatory receptor required for response to the bitter in taste neurons. Gr66a cells respond to bitter compounds such as caffeine, theophylline, threonine or valine. Flies avoid bitter substances, suggesting that Gr66a neuron activity is sufficient to mediate avoidance behavior. Required for sensing and avoiding N,N-Diethyl-meta-toluamide (DEET), the most widely used insect repellent worldwide, as well as to L-canavanine, a plant-derived insecticide. Gr66a neurons are also involved in the sex-specific perception of molecules inducing male avoidance behavior, probably through sensing 7-tricosene (7-T), a male cuticular pheromone and leading to inhibition of male-male courtship. Finally, also plays a role in oviposition behavior, in which females evaluate their environment and choose to lay eggs on substrates they may find aversive in other contexts. The chain is Gustatory receptor for bitter taste 66a (Gr66a) from Drosophila melanogaster (Fruit fly).